Reading from the N-terminus, the 121-residue chain is Lysozyme (121 aa).

One can recognise a C-type lysozyme domain in the interval 1–121 (KTFTRCELVQ…NKPLPDISKC (121 aa)). Cystine bridges form between cysteine 6–cysteine 121, cysteine 27–cysteine 110, cysteine 62–cysteine 76, and cysteine 72–cysteine 90. Active-site residues include glutamate 32 and aspartate 50.

Belongs to the glycosyl hydrolase 22 family.

It catalyses the reaction Hydrolysis of (1-&gt;4)-beta-linkages between N-acetylmuramic acid and N-acetyl-D-glucosamine residues in a peptidoglycan and between N-acetyl-D-glucosamine residues in chitodextrins.. Functionally, lysozymes have primarily a bacteriolytic function; those in tissues and body fluids are associated with the monocyte-macrophage system and enhance the activity of immunoagents. The polypeptide is Lysozyme (Galleria mellonella (Greater wax moth)).